We begin with the raw amino-acid sequence, 1208 residues long: DNA-directed RNA polymerase subunit beta (1208 aa).

The protein belongs to the RNA polymerase beta chain family. In terms of assembly, the RNAP catalytic core consists of 2 alpha, 1 beta, 1 beta' and 1 omega subunit. When a sigma factor is associated with the core the holoenzyme is formed, which can initiate transcription.

The enzyme catalyses RNA(n) + a ribonucleoside 5'-triphosphate = RNA(n+1) + diphosphate. Its function is as follows. DNA-dependent RNA polymerase catalyzes the transcription of DNA into RNA using the four ribonucleoside triphosphates as substrates. In Enterococcus faecium (Streptococcus faecium), this protein is DNA-directed RNA polymerase subunit beta.